Here is a 313-residue protein sequence, read N- to C-terminus: Epoxide hydrolase 1 (313 aa).

The 275-residue stretch at 25–299 (PAVLFLHGFP…AAHFINQEKA (275 aa)) folds into the AB hydrolase-1 domain. Asp-100 acts as the Nucleophile in catalysis. Tyr-149 lines the an epoxide pocket. Tyr-227 serves as the catalytic Proton donor. His-292 acts as the Proton acceptor in catalysis.

The protein belongs to the AB hydrolase superfamily. Epoxide hydrolase family. Homodimer. In terms of tissue distribution, highly expressed in fruits 15 days after anthesis (15-DAA).

It carries out the reaction an epoxide + H2O = an ethanediol. It catalyses the reaction (24S)-24,25-epoxycucurbitadienol + H2O = (24R)-24,25-dihydroxycucurbitadienol. The protein operates within secondary metabolite biosynthesis; terpenoid biosynthesis. Functionally, epoxide hydrolase involved in the biosynthesis of cucurbitacin and mogroside tetracyclic triterpene natural products (e.g. siamenoside I and mogrosides IV, V and VI). Cucurbitacins have cytotoxic properties and exhibit deterrent taste as a defense barrier against herbivores. Mogrosides are nonsugar highly oxygenated compounds used as high-intensity zero-calorie sweeteners; they also possess pharmacological properties such as regulating immunity, lowering blood sugar and lipid levels, protecting the liver, and acting as antioxidants and antitumor agents. Catalyzes the hydrolysis of aromatic epoxide-containing substrates, such as the conversion of 24,25-epoxycucurbitadienol to 24,25-dihydroxycucurbitadienol. The protein is Epoxide hydrolase 1 of Siraitia grosvenorii (Monk's fruit).